The following is a 303-amino-acid chain: Glutamyl-Q tRNA(Asp) synthetase (303 aa).

Residues 16–20 (RFAPS) and Glu52 each bind L-glutamate. The 'HIGH' region signature appears at 19-29 (PSPSGPLHFGS). Cys108, Cys110, Tyr122, and Cys126 together coordinate Zn(2+). Residues Tyr177 and Arg195 each coordinate L-glutamate. A 'KMSKS' region motif is present at residues 233–237 (KLSKQ). An ATP-binding site is contributed by Lys236.

This sequence belongs to the class-I aminoacyl-tRNA synthetase family. GluQ subfamily. Requires Zn(2+) as cofactor.

In terms of biological role, catalyzes the tRNA-independent activation of glutamate in presence of ATP and the subsequent transfer of glutamate onto a tRNA(Asp). Glutamate is transferred on the 2-amino-5-(4,5-dihydroxy-2-cyclopenten-1-yl) moiety of the queuosine in the wobble position of the QUC anticodon. The chain is Glutamyl-Q tRNA(Asp) synthetase from Vibrio vulnificus (strain CMCP6).